A 427-amino-acid polypeptide reads, in one-letter code: tRNA(Ile)-lysidine synthase (427 aa).

18–23 (SGGLDS) provides a ligand contact to ATP.

This sequence belongs to the tRNA(Ile)-lysidine synthase family.

It localises to the cytoplasm. It catalyses the reaction cytidine(34) in tRNA(Ile2) + L-lysine + ATP = lysidine(34) in tRNA(Ile2) + AMP + diphosphate + H(+). Functionally, ligates lysine onto the cytidine present at position 34 of the AUA codon-specific tRNA(Ile) that contains the anticodon CAU, in an ATP-dependent manner. Cytidine is converted to lysidine, thus changing the amino acid specificity of the tRNA from methionine to isoleucine. This chain is tRNA(Ile)-lysidine synthase, found in Pseudomonas putida (strain ATCC 47054 / DSM 6125 / CFBP 8728 / NCIMB 11950 / KT2440).